Reading from the N-terminus, the 186-residue chain is Ribosome-recycling factor (186 aa).

The interval 135-164 (DGMDDLKKAEKDGEIGQDESRAQSERVQKM) is disordered.

It belongs to the RRF family.

The protein localises to the cytoplasm. Responsible for the release of ribosomes from messenger RNA at the termination of protein biosynthesis. May increase the efficiency of translation by recycling ribosomes from one round of translation to another. This Sinorhizobium medicae (strain WSM419) (Ensifer medicae) protein is Ribosome-recycling factor.